A 142-amino-acid polypeptide reads, in one-letter code: Large ribosomal subunit protein uL11 (142 aa).

It belongs to the universal ribosomal protein uL11 family. As to quaternary structure, part of the ribosomal stalk of the 50S ribosomal subunit. Interacts with L10 and the large rRNA to form the base of the stalk. L10 forms an elongated spine to which L12 dimers bind in a sequential fashion forming a multimeric L10(L12)X complex. Post-translationally, one or more lysine residues are methylated.

Forms part of the ribosomal stalk which helps the ribosome interact with GTP-bound translation factors. The sequence is that of Large ribosomal subunit protein uL11 from Shewanella frigidimarina (strain NCIMB 400).